Here is a 130-residue protein sequence, read N- to C-terminus: Putative protein ZNF815 (130 aa).

This Homo sapiens (Human) protein is Putative protein ZNF815 (ZNF815P).